A 29-amino-acid chain; its full sequence is Cytochrome c oxidase subunit 7A2, mitochondrial (29 aa).

Lys-10 carries the N6-acetyllysine modification.

This sequence belongs to the cytochrome c oxidase VIIa family. In terms of assembly, component of the cytochrome c oxidase (complex IV, CIV), a multisubunit enzyme composed of 14 subunits. The complex is composed of a catalytic core of 3 subunits MT-CO1, MT-CO2 and MT-CO3, encoded in the mitochondrial DNA, and 11 supernumerary subunits COX4I, COX5A, COX5B, COX6A, COX6B, COX6C, COX7A, COX7B, COX7C, COX8 and NDUFA4, which are encoded in the nuclear genome. The complex exists as a monomer or a dimer and forms supercomplexes (SCs) in the inner mitochondrial membrane with NADH-ubiquinone oxidoreductase (complex I, CI) and ubiquinol-cytochrome c oxidoreductase (cytochrome b-c1 complex, complex III, CIII), resulting in different assemblies (supercomplex SCI(1)III(2)IV(1) and megacomplex MCI(2)III(2)IV(2)). Interacts with PET100.

It is found in the mitochondrion inner membrane. It participates in energy metabolism; oxidative phosphorylation. Its function is as follows. Component of the cytochrome c oxidase, the last enzyme in the mitochondrial electron transport chain which drives oxidative phosphorylation. The respiratory chain contains 3 multisubunit complexes succinate dehydrogenase (complex II, CII), ubiquinol-cytochrome c oxidoreductase (cytochrome b-c1 complex, complex III, CIII) and cytochrome c oxidase (complex IV, CIV), that cooperate to transfer electrons derived from NADH and succinate to molecular oxygen, creating an electrochemical gradient over the inner membrane that drives transmembrane transport and the ATP synthase. Cytochrome c oxidase is the component of the respiratory chain that catalyzes the reduction of oxygen to water. Electrons originating from reduced cytochrome c in the intermembrane space (IMS) are transferred via the dinuclear copper A center (CU(A)) of subunit 2 and heme A of subunit 1 to the active site in subunit 1, a binuclear center (BNC) formed by heme A3 and copper B (CU(B)). The BNC reduces molecular oxygen to 2 water molecules using 4 electrons from cytochrome c in the IMS and 4 protons from the mitochondrial matrix. This is Cytochrome c oxidase subunit 7A2, mitochondrial (COX7A2) from Canis lupus familiaris (Dog).